Here is a 1766-residue protein sequence, read N- to C-terminus: DNA-directed RNA polymerase II subunit RPB1-B (1766 aa).

C69, C72, C79, and H82 together coordinate Zn(2+). D487, D489, and D491 together coordinate Mg(2+). A bridging helix region spans residues P813–E825. The segment at H1660–Q1766 is disordered. The segment covering R1706–D1716 has biased composition (basic and acidic residues). Residues P1742 to A1756 are compositionally biased toward low complexity.

Belongs to the RNA polymerase beta' chain family. In terms of assembly, component of the RNA polymerase II (Pol II) complex consisting of 12 subunits.

It localises to the nucleus. The enzyme catalyses RNA(n) + a ribonucleoside 5'-triphosphate = RNA(n+1) + diphosphate. DNA-dependent RNA polymerase catalyzes the transcription of DNA into RNA using the four ribonucleoside triphosphates as substrates. Largest and catalytic component of RNA polymerase II which synthesizes mRNA precursors and many functional non-coding RNAs. Forms the polymerase active center together with the second largest subunit. Pol II is the central component of the basal RNA polymerase II transcription machinery. It is composed of mobile elements that move relative to each other. RPB1 is part of the core element with the central large cleft, the clamp element that moves to open and close the cleft and the jaws that are thought to grab the incoming DNA template. At the start of transcription, a single-stranded DNA template strand of the promoter is positioned within the central active site cleft of Pol II. A bridging helix emanates from RPB1 and crosses the cleft near the catalytic site and is thought to promote translocation of Pol II by acting as a ratchet that moves the RNA-DNA hybrid through the active site by switching from straight to bent conformations at each step of nucleotide addition. During transcription elongation, Pol II moves on the template as the transcript elongates. This is DNA-directed RNA polymerase II subunit RPB1-B (TRP5.9) from Trypanosoma brucei brucei.